The sequence spans 116 residues: Large ribosomal subunit protein uL18 (116 aa).

Belongs to the universal ribosomal protein uL18 family. Part of the 50S ribosomal subunit; part of the 5S rRNA/L5/L18/L25 subcomplex. Contacts the 5S and 23S rRNAs.

This is one of the proteins that bind and probably mediate the attachment of the 5S RNA into the large ribosomal subunit, where it forms part of the central protuberance. This is Large ribosomal subunit protein uL18 from Ectopseudomonas mendocina (strain ymp) (Pseudomonas mendocina).